The following is a 368-amino-acid chain: Histidinol-phosphate aminotransferase (368 aa).

Lys-229 is subject to N6-(pyridoxal phosphate)lysine.

This sequence belongs to the class-II pyridoxal-phosphate-dependent aminotransferase family. Histidinol-phosphate aminotransferase subfamily. As to quaternary structure, homodimer. It depends on pyridoxal 5'-phosphate as a cofactor.

The enzyme catalyses L-histidinol phosphate + 2-oxoglutarate = 3-(imidazol-4-yl)-2-oxopropyl phosphate + L-glutamate. The protein operates within amino-acid biosynthesis; L-histidine biosynthesis; L-histidine from 5-phospho-alpha-D-ribose 1-diphosphate: step 7/9. This chain is Histidinol-phosphate aminotransferase, found in Acidovorax ebreus (strain TPSY) (Diaphorobacter sp. (strain TPSY)).